We begin with the raw amino-acid sequence, 282 residues long: MSNKIINLGSIEIANDKPFVLFGGMNVLESRDLAMSIAETYAEVTQKLGIPYVFKASFDKANRSSVNSYRGPGMEEGLKIFEEIKKTFNLPLITDVHEPYQCAPVAEVVDIIQLPAFLARQTDLVVAMAKTGAIINVKKPQFLAPHEMRHIITKFNEAGNDEIILCERGSCFGYNNLVVDMLGMDEMKQSGYPVIFDATHALQRPGGRADSAGGRRAQATELARSGMALGLAGLFIEAHPDPDNAKCDGPCALPLHQLENYLKQMKAIDDLVKSFDPIDTSK.

It belongs to the KdsA family.

The protein resides in the cytoplasm. It carries out the reaction D-arabinose 5-phosphate + phosphoenolpyruvate + H2O = 3-deoxy-alpha-D-manno-2-octulosonate-8-phosphate + phosphate. The protein operates within carbohydrate biosynthesis; 3-deoxy-D-manno-octulosonate biosynthesis; 3-deoxy-D-manno-octulosonate from D-ribulose 5-phosphate: step 2/3. It functions in the pathway bacterial outer membrane biogenesis; lipopolysaccharide biosynthesis. In Shewanella sp. (strain MR-4), this protein is 2-dehydro-3-deoxyphosphooctonate aldolase.